Consider the following 486-residue polypeptide: Probable cytosol aminopeptidase (486 aa).

The Mn(2+) site is built by Lys-256 and Asp-261. Lys-268 is a catalytic residue. 3 residues coordinate Mn(2+): Asp-280, Asp-339, and Glu-341. Residue Arg-343 is part of the active site.

It belongs to the peptidase M17 family. Mn(2+) is required as a cofactor.

It is found in the cytoplasm. The catalysed reaction is Release of an N-terminal amino acid, Xaa-|-Yaa-, in which Xaa is preferably Leu, but may be other amino acids including Pro although not Arg or Lys, and Yaa may be Pro. Amino acid amides and methyl esters are also readily hydrolyzed, but rates on arylamides are exceedingly low.. It carries out the reaction Release of an N-terminal amino acid, preferentially leucine, but not glutamic or aspartic acids.. Functionally, presumably involved in the processing and regular turnover of intracellular proteins. Catalyzes the removal of unsubstituted N-terminal amino acids from various peptides. The chain is Probable cytosol aminopeptidase from Synechococcus sp. (strain ATCC 27144 / PCC 6301 / SAUG 1402/1) (Anacystis nidulans).